The following is a 233-amino-acid chain: Thrombin-like enzyme elegaxobin-1 (233 aa).

Residues 1 to 224 (VIGGDECNIN…HLDWIKGIIA (224 aa)) form the Peptidase S1 domain. Cystine bridges form between Cys7/Cys138, Cys25/Cys41, Cys73/Cys231, Cys117/Cys185, Cys149/Cys164, and Cys175/Cys200. Catalysis depends on charge relay system residues His40 and Asp85. The Charge relay system role is filled by Ser179.

The protein belongs to the peptidase S1 family. Snake venom subfamily. Monomer. Expressed by the venom gland.

The protein localises to the secreted. Its function is as follows. Thrombin-like snake venom serine protease that clots rabbit fibrinogen. Only the beta chain of fibrinogen (FGB) is cleaved, releasing fibrinopeptide B. Incubation with human fibrinogen alpha and beta resulted in cleavage of both fibrinogen chains but generated neither fibrinopeptide A nor fibrinopeptide B. Promotes clotting of rabbit fibrinogen, but not bovine or human fibrinogen. This Protobothrops elegans (Elegant pitviper) protein is Thrombin-like enzyme elegaxobin-1.